The primary structure comprises 604 residues: Procollagen galactosyltransferase 1 (604 aa).

The first 18 residues, 1–18 (MHLLCFFFLLLWTGPARS), serve as a signal peptide directing secretion. Residues asparagine 78, asparagine 166, asparagine 363, and asparagine 561 are each glycosylated (N-linked (GlcNAc...) asparagine). The span at 570–580 (RARSRKSREQE) shows a compositional bias: basic and acidic residues. Positions 570 to 604 (RARSRKSREQEELSSEAQNTDVLQSPLDSTARDEL) are disordered. Polar residues predominate over residues 584 to 597 (SEAQNTDVLQSPLD). The Prevents secretion from ER motif lies at 601-604 (RDEL).

Belongs to the glycosyltransferase 25 family.

It is found in the endoplasmic reticulum lumen. It carries out the reaction (5R)-5-hydroxy-L-lysyl-[collagen] + UDP-alpha-D-galactose = (5R)-5-O-(beta-D-galactosyl)-5-hydroxy-L-lysyl-[collagen] + UDP + H(+). Beta-galactosyltransferase that transfers beta-galactose to hydroxylysine residues of type I collagen. By acting on collagen glycosylation, facilitates the formation of collagen triple helix. The protein is Procollagen galactosyltransferase 1 (colgalt1) of Danio rerio (Zebrafish).